The chain runs to 246 residues: Cold-regulated protein 27 (246 aa).

Disordered stretches follow at residues 1 to 39 (MVGDYRGRFSSRRFSDDSDDSSDDASSVEGETTSSMYSA) and 151 to 232 (EPEN…VVPL). Residues 168–180 (SSGSASSLKQLSS) show a composition bias toward low complexity.

It is found in the nucleus. Its function is as follows. Together with COR28, involved in central circadian clock regulation and in flowering promotion, by binding to the chromatin of clock-associated evening genes TOC1, PRR5, ELF4 and cold-responsive genes in order to repress their transcription. Negative regulator of freezing tolerance. The chain is Cold-regulated protein 27 from Arabidopsis thaliana (Mouse-ear cress).